We begin with the raw amino-acid sequence, 605 residues long: Protein phosphatase 1D (605 aa).

An interaction with CHEK1 region spans residues M1–F101. The region spanning G8–I375 is the PPM-type phosphatase domain. Residues V28–R90 form a disordered region. A phosphoserine mark is found at S40 and S85. D105, G106, D314, and D366 together coordinate Mn(2+). The segment at S516–G591 is disordered. Composition is skewed to polar residues over residues P530–G544 and L555–K577. The span at T579–K588 shows a compositional bias: basic residues.

The protein belongs to the PP2C family. Interacts with CHEK1 and CHEK2; dephosphorylates them. Interacts with MAPK14. It depends on Mg(2+) as a cofactor. Mn(2+) serves as cofactor. In terms of tissue distribution, expressed in fetal and adult brain. Also detected in fetal liver and skeletal muscle, but not in their adult counterparts.

It localises to the nucleus. Its subcellular location is the cytoplasm. The protein resides in the cytosol. It catalyses the reaction O-phospho-L-seryl-[protein] + H2O = L-seryl-[protein] + phosphate. It carries out the reaction O-phospho-L-threonyl-[protein] + H2O = L-threonyl-[protein] + phosphate. Its function is as follows. Involved in the negative regulation of p53 expression. Required for the relief of p53-dependent checkpoint mediated cell cycle arrest. Binds to and dephosphorylates 'Ser-15' of TP53 and 'Ser-345' of CHEK1 which contributes to the functional inactivation of these proteins. Mediates MAPK14 dephosphorylation and inactivation. Is also an important regulator of global heterochromatin silencing and critical in maintaining genome integrity. In Homo sapiens (Human), this protein is Protein phosphatase 1D (PPM1D).